We begin with the raw amino-acid sequence, 260 residues long: Ribosomal RNA small subunit methyltransferase G (260 aa).

Residues Gly94, Phe99, 117-119 (DST), 145-146 (AE), and Arg164 each bind S-adenosyl-L-methionine. The segment at 236-260 (APTPPPYPRSPGTPKRQPLGQSNRP) is disordered. Residues 237–246 (PTPPPYPRSP) show a composition bias toward pro residues.

Belongs to the methyltransferase superfamily. RNA methyltransferase RsmG family.

It is found in the cytoplasm. Functionally, specifically methylates the N7 position of a guanine in 16S rRNA. The protein is Ribosomal RNA small subunit methyltransferase G of Synechococcus sp. (strain JA-2-3B'a(2-13)) (Cyanobacteria bacterium Yellowstone B-Prime).